Consider the following 314-residue polypeptide: Putative methylthioribose-1-phosphate isomerase (314 aa).

Substrate-binding positions include 45–47, Arg-79, and Gln-177; that span reads RGA. Residue Asp-218 is the Proton donor of the active site. 227–228 serves as a coordination point for substrate; that stretch reads NK.

This sequence belongs to the eIF-2B alpha/beta/delta subunits family. MtnA subfamily.

It catalyses the reaction 5-(methylsulfanyl)-alpha-D-ribose 1-phosphate = 5-(methylsulfanyl)-D-ribulose 1-phosphate. Catalyzes the interconversion of methylthioribose-1-phosphate (MTR-1-P) into methylthioribulose-1-phosphate (MTRu-1-P). The protein is Putative methylthioribose-1-phosphate isomerase of Methanosphaera stadtmanae (strain ATCC 43021 / DSM 3091 / JCM 11832 / MCB-3).